The following is a 129-amino-acid chain: Large ribosomal subunit protein bL19 (129 aa).

Functionally, this protein is located at the 30S-50S ribosomal subunit interface and may play a role in the structure and function of the aminoacyl-tRNA binding site. This is Large ribosomal subunit protein bL19 from Rhodopseudomonas palustris (strain ATCC BAA-98 / CGA009).